The following is a 255-amino-acid chain: Imidazole glycerol phosphate synthase subunit HisF (255 aa).

Catalysis depends on residues D12 and D131.

This sequence belongs to the HisA/HisF family. In terms of assembly, heterodimer of HisH and HisF.

It is found in the cytoplasm. The enzyme catalyses 5-[(5-phospho-1-deoxy-D-ribulos-1-ylimino)methylamino]-1-(5-phospho-beta-D-ribosyl)imidazole-4-carboxamide + L-glutamine = D-erythro-1-(imidazol-4-yl)glycerol 3-phosphate + 5-amino-1-(5-phospho-beta-D-ribosyl)imidazole-4-carboxamide + L-glutamate + H(+). Its pathway is amino-acid biosynthesis; L-histidine biosynthesis; L-histidine from 5-phospho-alpha-D-ribose 1-diphosphate: step 5/9. Its function is as follows. IGPS catalyzes the conversion of PRFAR and glutamine to IGP, AICAR and glutamate. The HisF subunit catalyzes the cyclization activity that produces IGP and AICAR from PRFAR using the ammonia provided by the HisH subunit. The sequence is that of Imidazole glycerol phosphate synthase subunit HisF from Sphingopyxis alaskensis (strain DSM 13593 / LMG 18877 / RB2256) (Sphingomonas alaskensis).